Here is a 242-residue protein sequence, read N- to C-terminus: MSWQRPDGRTAAQLRPISFQRHFTRYAPGSVLVKFGDTHVLCTASVAEEVPPFLQNTGQGWLTAEYRMLPTATQQRQPRETLKVSGRTAEIQRLIGRSLRAALDFHKLGSRTITVDADVLQADGSTRTAAITGGYVALHDAITWLYKQGLLDPAQGSPLRQQVAALSVGIVRGEVLVDLCYEEDSQAEVDMNIVMNEQGALIEIQGTAEAGCFDRSQLLQMLDMAQAGIQELLRAQRETLNL.

Residues arginine 87 and 125-127 (STR) each bind phosphate.

The protein belongs to the RNase PH family. As to quaternary structure, homohexameric ring arranged as a trimer of dimers.

The catalysed reaction is tRNA(n+1) + phosphate = tRNA(n) + a ribonucleoside 5'-diphosphate. Phosphorolytic 3'-5' exoribonuclease that plays an important role in tRNA 3'-end maturation. Removes nucleotide residues following the 3'-CCA terminus of tRNAs; can also add nucleotides to the ends of RNA molecules by using nucleoside diphosphates as substrates, but this may not be physiologically important. Probably plays a role in initiation of 16S rRNA degradation (leading to ribosome degradation) during starvation. The chain is Ribonuclease PH from Synechococcus sp. (strain JA-3-3Ab) (Cyanobacteria bacterium Yellowstone A-Prime).